Reading from the N-terminus, the 268-residue chain is Glucosamine-6-phosphate deaminase (268 aa).

Asp-72 acts as the Proton acceptor; for enolization step in catalysis. Asp-141 serves as the catalytic For ring-opening step. Residue His-143 is the Proton acceptor; for ring-opening step of the active site. The active-site For ring-opening step is the Glu-148.

The protein belongs to the glucosamine/galactosamine-6-phosphate isomerase family. NagB subfamily.

It catalyses the reaction alpha-D-glucosamine 6-phosphate + H2O = beta-D-fructose 6-phosphate + NH4(+). The protein operates within amino-sugar metabolism; N-acetylneuraminate degradation; D-fructose 6-phosphate from N-acetylneuraminate: step 5/5. Allosterically activated by N-acetylglucosamine 6-phosphate (GlcNAc6P). Its function is as follows. Catalyzes the reversible isomerization-deamination of glucosamine 6-phosphate (GlcN6P) to form fructose 6-phosphate (Fru6P) and ammonium ion. This Borrelia garinii subsp. bavariensis (strain ATCC BAA-2496 / DSM 23469 / PBi) (Borreliella bavariensis) protein is Glucosamine-6-phosphate deaminase.